A 335-amino-acid polypeptide reads, in one-letter code: tRNA-splicing endonuclease (335 aa).

Active-site residues include Tyr-269, His-280, and Lys-311.

This sequence belongs to the tRNA-intron endonuclease family. Archaeal long subfamily. Homodimer.

The enzyme catalyses pretRNA = a 3'-half-tRNA molecule with a 5'-OH end + a 5'-half-tRNA molecule with a 2',3'-cyclic phosphate end + an intron with a 2',3'-cyclic phosphate and a 5'-hydroxyl terminus.. Endonuclease that removes tRNA introns. Cleaves pre-tRNA at the 5'- and 3'-splice sites to release the intron. The products are an intron and two tRNA half-molecules bearing 2',3' cyclic phosphate and 5'-OH termini. Recognizes a pseudosymmetric substrate in which 2 bulged loops of 3 bases are separated by a stem of 4 bp. This is tRNA-splicing endonuclease from Haloarcula marismortui (strain ATCC 43049 / DSM 3752 / JCM 8966 / VKM B-1809) (Halobacterium marismortui).